The following is a 256-amino-acid chain: Polycomb group RING finger protein 5 (256 aa).

Residues 18-57 (CYICKGYLIKPTTVTECLHTFCKTCIVQHFEDSNDCPRCG) form an RING-type zinc finger. 2 stretches are compositionally biased toward basic and acidic residues: residues 94-103 (ESEFWKKNKP) and 110-120 (DTSKADKPKVD). Residues 94-133 (ESEFWKKNKPQENGQDDTSKADKPKVDEEGDENEDDKDYH) are disordered.

As to quaternary structure, component of a PRC1-like complex that contains PCGF5, RNF2 and UBE2D3. Interacts with RNF2; the interaction is direct. Interacts with CBX6, CBX7 and CBX8. Interacts with AUTS2; the interaction is direct. Identified in a complex that contains AUTS2, PCGF5, CSNK2B and RNF2.

Its subcellular location is the nucleus. It localises to the nucleoplasm. Its function is as follows. Component of a Polycomb group (PcG) multiprotein PRC1-like complex, a complex class required to maintain the transcriptionally repressive state of many genes, including Hox genes, throughout development. PcG PRC1 complex acts via chromatin remodeling and modification of histones; it mediates monoubiquitination of histone H2A 'Lys-119', rendering chromatin heritably changed in its expressibility. Within the PRC1-like complex, regulates RNF2 ubiquitin ligase activity. Plays a redundant role with PCGF3 as part of a PRC1-like complex that mediates monoubiquitination of histone H2A 'Lys-119' on the X chromosome and is required for normal silencing of one copy of the X chromosome in XX females. This is Polycomb group RING finger protein 5 (PCGF5) from Homo sapiens (Human).